The chain runs to 143 residues: Protein RJ1 (143 aa).

The first 26 residues, 1-26, serve as a signal peptide directing secretion; it reads MARVMTRGMARVSTLATVRVSTLARA.

In Human herpesvirus 6A (strain Uganda-1102) (HHV-6 variant A), this protein is Protein RJ1 (RJ1).